Here is a 388-residue protein sequence, read N- to C-terminus: Dual-specificity RNA methyltransferase RlmN (388 aa).

Residue Glu109 is the Proton acceptor of the active site. Residues Glu115–Asp354 form the Radical SAM core domain. Cysteines 122 and 359 form a disulfide. The [4Fe-4S] cluster site is built by Cys129, Cys133, and Cys136. S-adenosyl-L-methionine-binding positions include Gly183–Glu184, Ser215, Ser237–His239, and Asn316. Cys359 functions as the S-methylcysteine intermediate in the catalytic mechanism.

The protein belongs to the radical SAM superfamily. RlmN family. It depends on [4Fe-4S] cluster as a cofactor.

It localises to the cytoplasm. The catalysed reaction is adenosine(2503) in 23S rRNA + 2 reduced [2Fe-2S]-[ferredoxin] + 2 S-adenosyl-L-methionine = 2-methyladenosine(2503) in 23S rRNA + 5'-deoxyadenosine + L-methionine + 2 oxidized [2Fe-2S]-[ferredoxin] + S-adenosyl-L-homocysteine. It catalyses the reaction adenosine(37) in tRNA + 2 reduced [2Fe-2S]-[ferredoxin] + 2 S-adenosyl-L-methionine = 2-methyladenosine(37) in tRNA + 5'-deoxyadenosine + L-methionine + 2 oxidized [2Fe-2S]-[ferredoxin] + S-adenosyl-L-homocysteine. Functionally, specifically methylates position 2 of adenine 2503 in 23S rRNA and position 2 of adenine 37 in tRNAs. m2A2503 modification seems to play a crucial role in the proofreading step occurring at the peptidyl transferase center and thus would serve to optimize ribosomal fidelity. The polypeptide is Dual-specificity RNA methyltransferase RlmN (Cronobacter sakazakii (strain ATCC BAA-894) (Enterobacter sakazakii)).